A 103-amino-acid polypeptide reads, in one-letter code: Large ribosomal subunit protein uL22c (103 aa).

Belongs to the universal ribosomal protein uL22 family. Part of the 50S ribosomal subunit.

The protein resides in the plastid. It localises to the chloroplast. Its function is as follows. This protein binds specifically to 23S rRNA. In terms of biological role, the globular domain of the protein is located near the polypeptide exit tunnel on the outside of the subunit, while an extended beta-hairpin is found that lines the wall of the exit tunnel in the center of the 70S ribosome. This chain is Large ribosomal subunit protein uL22c (rpl22), found in Cyanidium caldarium (Red alga).